We begin with the raw amino-acid sequence, 306 residues long: Immune protein Tsi7 (306 aa).

Interacts with Tse7.

Functionally, immunity protein that plays a role in preventing early activation of toxin Tse7. Protects thereby cells from Tse7 DNase activity. The protein is Immune protein Tsi7 of Pseudomonas aeruginosa (strain ATCC 15692 / DSM 22644 / CIP 104116 / JCM 14847 / LMG 12228 / 1C / PRS 101 / PAO1).